Reading from the N-terminus, the 315-residue chain is HVA22-like protein h (315 aa).

Residues 148 to 315 (PKPKPKEKKQ…RKARSAGAPR (168 aa)) are disordered. Residues 173–190 (ATSQAASSNPQVRLQSKK) show a composition bias toward polar residues. Over residues 234 to 248 (PPGPPPPPPPPPPSP) the composition is skewed to pro residues.

Belongs to the DP1 family.

In Arabidopsis thaliana (Mouse-ear cress), this protein is HVA22-like protein h (HVA22H).